Reading from the N-terminus, the 275-residue chain is Release factor glutamine methyltransferase (275 aa).

Residues 114-118 (GTGSG), Asp137, Trp165, and Asn180 each bind S-adenosyl-L-methionine. 180–183 (NPPY) lines the substrate pocket.

The protein belongs to the protein N5-glutamine methyltransferase family. PrmC subfamily.

The catalysed reaction is L-glutaminyl-[peptide chain release factor] + S-adenosyl-L-methionine = N(5)-methyl-L-glutaminyl-[peptide chain release factor] + S-adenosyl-L-homocysteine + H(+). Its function is as follows. Methylates the class 1 translation termination release factors RF1/PrfA and RF2/PrfB on the glutamine residue of the universally conserved GGQ motif. In Xylella fastidiosa (strain Temecula1 / ATCC 700964), this protein is Release factor glutamine methyltransferase.